Reading from the N-terminus, the 561-residue chain is Inner membrane ABC transporter ATP-binding protein YddA (561 aa).

Topologically, residues methionine 1 to threonine 3 are cytoplasmic. Residues isoleucine 4 to leucine 24 form a helical membrane-spanning segment. Residues arginine 25–serine 31 are Periplasmic-facing. A helical membrane pass occupies residues valine 32 to leucine 52. One can recognise an ABC transmembrane type-1 domain in the interval isoleucine 35–glutamate 337. The Cytoplasmic segment spans residues asparagine 53–lysine 70. Residues leucine 71–asparagine 91 traverse the membrane as a helical segment. Topologically, residues lysine 92–threonine 151 are periplasmic. The chain crosses the membrane as a helical span at residues leucine 152–leucine 172. At tryptophan 173–glutamate 187 the chain is on the cytoplasmic side. Residues tryptophan 188–phenylalanine 208 traverse the membrane as a helical segment. At threonine 209–serine 290 the chain is on the periplasmic side. Residues valine 291–leucine 311 form a helical membrane-spanning segment. At methionine 312 to leucine 561 the chain is on the cytoplasmic side. The ABC transporter domain occupies valine 367 to leucine 561. An ATP-binding site is contributed by glycine 400–threonine 407.

This sequence belongs to the ABC transporter superfamily.

It is found in the cell inner membrane. The protein is Inner membrane ABC transporter ATP-binding protein YddA (yddA) of Escherichia coli (strain K12).